We begin with the raw amino-acid sequence, 623 residues long: Protein EDS1 (623 aa).

A2 bears the N-acetylalanine mark. The Nucleophile role is filled by S123. Active-site charge relay system residues include D187 and H317. The stretch at 358-383 (VQAALEEEKKRVENQKKIIQVIEQER) forms a coiled coil.

As to quaternary structure, homodimer. Interacts with RPS4, RPS6, SNC1, SRFR1, AvrRps4 and HopA1. Part of a nuclear complex made of EDS1, PAD4 and SAG101, that can be redirected to the cytoplasm in the presence of an extranuclear form of EDS1. Interacts (via N-terminus) with PAD4 (via N-terminus). Interacts (via N-terminus) with SAG101. EDS1-SAG101 and EDS1-PAD4 form separate complexes in pathogen-unchallenged cells. Part of a nuclear protein complex made of VICTR, PAD4 and EDS1. Interacts with VICTR.

The protein localises to the nucleus. The protein resides in the cytoplasm. Its subcellular location is the microsome. In terms of biological role, positive regulator of basal resistance and of effector-triggered immunity specifically mediated by TIR-NB-LRR (TNL) resistance proteins. Disruption by bacterial effector of EDS1-TIR-NB-LRR resistance protein interactions constitutes the first step in resistance activation. Acts redundantly with salicylic acid to regulate resistance gene-mediated signaling. Triggers early plant defenses and hypersensitive response independently of PAD4, and then recruits PAD4 to potentiate plant defenses through the accumulation of salicylic acid. Nuclear localization is essential for basal and TNL-conditioned immunity and for reprogramming defense gene expression, while cytoplasmic EDS1 is required to induce a complete immune response. Heterodimerization with PAD4 and/or SGA101 is necessary for TNL-mediated effector-triggered immunity. Contributes to nonhost resistance against E.amylovora. Loss of EDS1-PAD4 interaction compromises basal but not TNL-triggered resistance. Necessary for systemic acquired resistance (SAR) signal generation and perception. Has no direct lipase activity. Putative lipase activity is dispensable for immune functions. The polypeptide is Protein EDS1 (Arabidopsis thaliana (Mouse-ear cress)).